The following is a 319-amino-acid chain: Ferrochelatase (319 aa).

2 residues coordinate Fe cation: histidine 194 and glutamate 275.

It belongs to the ferrochelatase family.

It is found in the cytoplasm. It carries out the reaction heme b + 2 H(+) = protoporphyrin IX + Fe(2+). The protein operates within porphyrin-containing compound metabolism; protoheme biosynthesis; protoheme from protoporphyrin-IX: step 1/1. Functionally, catalyzes the ferrous insertion into protoporphyrin IX. This is Ferrochelatase from Vibrio vulnificus (strain CMCP6).